Reading from the N-terminus, the 199-residue chain is Octanoyltransferase (199 aa).

Residues serine 27–lysine 199 form the BPL/LPL catalytic domain. Substrate is bound by residues arginine 66–histidine 73, serine 133–glycine 135, and glycine 146–alanine 148. The active-site Acyl-thioester intermediate is cysteine 164.

It belongs to the LipB family.

It is found in the cytoplasm. The enzyme catalyses octanoyl-[ACP] + L-lysyl-[protein] = N(6)-octanoyl-L-lysyl-[protein] + holo-[ACP] + H(+). It functions in the pathway protein modification; protein lipoylation via endogenous pathway; protein N(6)-(lipoyl)lysine from octanoyl-[acyl-carrier-protein]: step 1/2. Its function is as follows. Catalyzes the transfer of endogenously produced octanoic acid from octanoyl-acyl-carrier-protein onto the lipoyl domains of lipoate-dependent enzymes. Lipoyl-ACP can also act as a substrate although octanoyl-ACP is likely to be the physiological substrate. This Legionella pneumophila (strain Lens) protein is Octanoyltransferase.